A 180-amino-acid chain; its full sequence is ATP-dependent protease subunit HslV (180 aa).

Residue Thr7 is part of the active site. Na(+) is bound by residues Gly165, Cys168, and Thr171.

Belongs to the peptidase T1B family. HslV subfamily. In terms of assembly, a double ring-shaped homohexamer of HslV is capped on each side by a ring-shaped HslU homohexamer. The assembly of the HslU/HslV complex is dependent on binding of ATP.

It localises to the cytoplasm. It catalyses the reaction ATP-dependent cleavage of peptide bonds with broad specificity.. With respect to regulation, allosterically activated by HslU binding. Protease subunit of a proteasome-like degradation complex believed to be a general protein degrading machinery. The sequence is that of ATP-dependent protease subunit HslV from Bacillus cereus (strain Q1).